A 222-amino-acid chain; its full sequence is Cytochrome b6 (222 aa).

A helical membrane pass occupies residues 39–59 (IFYCLGGITLTCFIIQFATGF). C42 provides a ligand contact to heme c. The heme b site is built by H93 and H107. The next 3 helical transmembrane spans lie at 97–117 (ASMM…TGGF), 123–143 (LTWI…VTGY), and 193–213 (LHTF…FLMI). 2 residues coordinate heme b: H194 and H209.

Belongs to the cytochrome b family. PetB subfamily. In terms of assembly, the 4 large subunits of the cytochrome b6-f complex are cytochrome b6, subunit IV (17 kDa polypeptide, PetD), cytochrome f and the Rieske protein, while the 4 small subunits are PetG, PetL, PetM and PetN. The complex functions as a dimer. The cofactor is heme b. Heme c is required as a cofactor.

The protein resides in the cellular thylakoid membrane. In terms of biological role, component of the cytochrome b6-f complex, which mediates electron transfer between photosystem II (PSII) and photosystem I (PSI), cyclic electron flow around PSI, and state transitions. The sequence is that of Cytochrome b6 (petB) from Picosynechococcus sp. (strain ATCC 27264 / PCC 7002 / PR-6) (Agmenellum quadruplicatum).